A 163-amino-acid polypeptide reads, in one-letter code: Cyclic pyranopterin monophosphate synthase (163 aa).

Substrate-binding positions include 75–77 and 115–116; these read MCH and ME. Aspartate 130 is an active-site residue.

This sequence belongs to the MoaC family. In terms of assembly, homohexamer; trimer of dimers.

The enzyme catalyses (8S)-3',8-cyclo-7,8-dihydroguanosine 5'-triphosphate = cyclic pyranopterin phosphate + diphosphate. It participates in cofactor biosynthesis; molybdopterin biosynthesis. Catalyzes the conversion of (8S)-3',8-cyclo-7,8-dihydroguanosine 5'-triphosphate to cyclic pyranopterin monophosphate (cPMP). The protein is Cyclic pyranopterin monophosphate synthase of Bacillus pumilus (strain SAFR-032).